A 143-amino-acid polypeptide reads, in one-letter code: Phosphoprotein 32 (143 aa).

A compositionally biased stretch (polar residues) spans 1-14 (MESSNINALQQPSS). Residues 1–32 (MESSNINALQQPSSIAHHPSKQCASSLNETVK) form a disordered region.

Belongs to the varicellovirus ORF32 protein family. Post-translationally, phosphorylated by ORF47 protein.

The chain is Phosphoprotein 32 from Homo sapiens (Human).